The sequence spans 430 residues: Dye-decolorizing peroxidase Tfu_3078 (430 aa).

Residues 1–39 constitute a signal peptide (tat-type signal); it reads MTEPDTERKGSSRRGFLAGLGAAALTGAGIGMAAGEVLR. The tract at residues 42 to 75 is disordered; the sequence is LPDSDPAASPEAEQRLRMAAQRADATAAPQPGIS. Residues 60 to 69 are compositionally biased toward low complexity; the sequence is AAQRADATAA. Asp-242 acts as the Proton acceptor in catalysis. Heme is bound at residue His-338.

This sequence belongs to the DyP-type peroxidase family. Monomer. Heme b serves as cofactor. Post-translationally, exported by the Tat system. The position of the signal peptide cleavage has not been experimentally proven.

The protein resides in the secreted. The catalysed reaction is Reactive Blue 5 + 2 H2O2 = 2,2'-disulfonyl azobenzene + 3-[(4-amino-6-chloro-1,3,5-triazin-2-yl)amino]benzenesulfonate + phthalate + 2 H2O + 2 H(+). In terms of biological role, peroxidase that is able to convert a large number of compounds, but its physiological substrate is not known. Shows high reactivity towards anthraquinone dyes (e.g. Reactive Blue 19) and a modest activity towards standard peroxidase substrates (such as guaiacol and 2,6-dimethoxyphenol) and azo dyes (e.g. Reactive Blue 5). Is also able to oxidize aromatic sulfides enantioselectively, resulting in the corresponding (R)-sulfoxides, but with a poor efficiency. Does not display catalase activity. The sequence is that of Dye-decolorizing peroxidase Tfu_3078 from Thermobifida fusca (strain YX).